We begin with the raw amino-acid sequence, 501 residues long: Probable pectate lyase 13 (501 aa).

Positions 1–22 (MLLQNFSNTIFLLCLFFTLLSA) are cleaved as a signal peptide. 2 N-linked (GlcNAc...) asparagine glycosylation sites follow: N27 and N49. The tract at residues 55–78 (RQLSSPSSSSSSSSSSSSSSCRTG) is disordered. Residues 58 to 74 (SSPSSSSSSSSSSSSSS) are compositionally biased toward low complexity. D217, D241, and D245 together coordinate Ca(2+). The active site involves R297. Disordered regions lie at residues 329-359 (INSQGNRYSAPSDPSAKEVTKRVDSKDDGEW) and 408-463 (NAGV…SSGD). Over residues 343–357 (SAKEVTKRVDSKDDG) the composition is skewed to basic and acidic residues. A compositionally biased stretch (gly residues) spans 430–449 (GGDGGGGGSSGGSSGGGMDV). Over residues 450–463 (MGGTTRGSSSSSGD) the composition is skewed to low complexity. A lipid anchor (GPI-anchor amidated serine) is attached at S474. Positions 475–501 (DAPSRPRLTLLFSLLMISVLSLSTLLL) are cleaved as a propeptide — removed in mature form.

The protein belongs to the polysaccharide lyase 1 family. It depends on Ca(2+) as a cofactor. Expressed equally in mature leaves, buds, flowers, rosettes and roots.

Its subcellular location is the cell membrane. The catalysed reaction is Eliminative cleavage of (1-&gt;4)-alpha-D-galacturonan to give oligosaccharides with 4-deoxy-alpha-D-galact-4-enuronosyl groups at their non-reducing ends.. It participates in glycan metabolism; pectin degradation; 2-dehydro-3-deoxy-D-gluconate from pectin: step 2/5. In terms of biological role, susceptibility factor required for infection by most powdery mildews, but not by unrelated pathogens. Exact function not known, but clearly affects cell wall composition. In Arabidopsis thaliana (Mouse-ear cress), this protein is Probable pectate lyase 13 (PMR6).